Here is a 236-residue protein sequence, read N- to C-terminus: Probable metal transport system ATP-binding protein TC_0697 (236 aa).

The ABC transporter domain occupies 5-236 (LILENVSFRY…FCCNTFGKCS (232 aa)). 39 to 46 (GPNGGGKT) is an ATP binding site.

It belongs to the ABC transporter superfamily.

Its subcellular location is the cell inner membrane. In terms of biological role, part of an ATP-driven transport system TC_0696/TC_0697/TC_0698 for a metal. Probably responsible for energy coupling to the transport system. The polypeptide is Probable metal transport system ATP-binding protein TC_0697 (Chlamydia muridarum (strain MoPn / Nigg)).